The chain runs to 272 residues: 2-dehydro-3-deoxyphosphooctonate aldolase (272 aa).

This sequence belongs to the KdsA family.

Its subcellular location is the cytoplasm. The catalysed reaction is D-arabinose 5-phosphate + phosphoenolpyruvate + H2O = 3-deoxy-alpha-D-manno-2-octulosonate-8-phosphate + phosphate. Its pathway is carbohydrate biosynthesis; 3-deoxy-D-manno-octulosonate biosynthesis; 3-deoxy-D-manno-octulosonate from D-ribulose 5-phosphate: step 2/3. It participates in bacterial outer membrane biogenesis; lipopolysaccharide biosynthesis. The sequence is that of 2-dehydro-3-deoxyphosphooctonate aldolase from Geobacter metallireducens (strain ATCC 53774 / DSM 7210 / GS-15).